The chain runs to 375 residues: G-protein coupled estrogen receptor 1 (375 aa).

Met-1 carries the N-acetylmethionine modification. The Extracellular portion of the chain corresponds to 1 to 62; sequence MDATTPAQTV…QQYVIALFLS (62 aa). 2 N-linked (GlcNAc...) asparagine glycosylation sites follow: Asn-32 and Asn-44. A helical membrane pass occupies residues 63 to 84; it reads CLYTIFLFPIGFVGNILILVVN. Residues 85–96 are Cytoplasmic-facing; the sequence is ISFREKMTIPDL. The helical transmembrane segment at 97–120 threads the bilayer; it reads YFINLAAADLILVADSLIEVFNLD. The Extracellular portion of the chain corresponds to 121–132; the sequence is EQYYDIAVLCTF. Cysteines 130 and 207 form a disulfide. Residues 133–153 traverse the membrane as a helical segment; that stretch reads MSLFLQINMYSSVFFLTWMSF. At 154-175 the chain is on the cytoplasmic side; sequence DRYLALAKAMRCGLFRTKHHAR. The chain crosses the membrane as a helical span at residues 176 to 194; that stretch reads LSCGLIWMASVSATLVPFT. The Extracellular portion of the chain corresponds to 195–220; the sequence is AVHLRHTEEACFCFADVREVQWLEVT. The helical transmembrane segment at 221 to 236 threads the bilayer; sequence LGFIMPFAIIGLCYSL. The Cytoplasmic portion of the chain corresponds to 237 to 259; that stretch reads IVRALIRAHRHRGLRPRRQKALR. A helical transmembrane segment spans residues 260–280; the sequence is MIFAVVLVFFICWLPENVFIS. At 281 to 306 the chain is on the extracellular side; the sequence is VHLLQWTQPGDTPCKQSFRHAYPLTG. The chain crosses the membrane as a helical span at residues 307–327; the sequence is HIVNLAAFSNSCLNPLIYSFL. Over 328–375 the chain is Cytoplasmic; that stretch reads GETFRDKLRLYVEQKTSLPALNRFCHATLKAVIPDSTEQSEVRFSSAV.

The protein belongs to the G-protein coupled receptor 1 family. As to quaternary structure, interacts with RAMP3; the interaction confers proper subcellular localization and function in cardioprotection. Interacts with KRT7 and KRT8. Interacts with EGFR; the interaction increases after agonist-induced stimulation in cancer-associated fibroblasts (CAF). Interacts with EGFR and ESR1. Interacts (via C-terminus tail motif) with DLG4 (via N-terminus tandem pair of PDZ domains); the interaction is direct and induces the increase of GPER1 protein levels residing at the plasma membrane surface in a estradiol-independent manner. Homodimer. Heterodimer; heterodimerizes with other G-protein-coupled receptor (GPCRs) like CRHR1, HTR1A and PAQR8. Ubiquitinated; ubiquitination occurs at the plasma membrane and leads to proteasome-mediated degradation. In terms of processing, N-glycosylated. Expressed in brain, heart, spleen, preadipocytes, mature adipocytes and primary hippocampal neurons. Expressed in neurons of the hippocampus, hypothalamic paraventricular nucleus (PVH), supraoptic nucleus (SON) and the median eminence. Expressed in the nucleus ambiguous (at protein level). Expressed in brain, pituitary gland, adrenal medulla, renal pelvis, ovary, endothelial cells, visceral fat tissues and islets of Langerhans.

It localises to the nucleus. Its subcellular location is the cytoplasm. It is found in the perinuclear region. The protein resides in the cytoskeleton. The protein localises to the cell membrane. It localises to the endoplasmic reticulum membrane. Its subcellular location is the golgi apparatus membrane. It is found in the cell projection. The protein resides in the dendrite. The protein localises to the cytoplasmic vesicle membrane. It localises to the early endosome. Its subcellular location is the recycling endosome. It is found in the golgi apparatus. The protein resides in the trans-Golgi network. The protein localises to the dendritic spine membrane. It localises to the axon. Its subcellular location is the postsynaptic density. It is found in the mitochondrion membrane. G-protein coupled estrogen receptor that binds to 17-beta-estradiol (E2) with high affinity, leading to rapid and transient activation of numerous intracellular signaling pathways. Stimulates cAMP production, calcium mobilization and tyrosine kinase Src inducing the release of heparin-bound epidermal growth factor (HB-EGF) and subsequent transactivation of the epidermal growth factor receptor (EGFR), activating downstream signaling pathways such as PI3K/Akt and ERK/MAPK. Mediates pleiotropic functions among others in the cardiovascular, endocrine, reproductive, immune and central nervous systems. Has a role in cardioprotection by reducing cardiac hypertrophy and perivascular fibrosis in a RAMP3-dependent manner. Regulates arterial blood pressure by stimulating vasodilation and reducing vascular smooth muscle and microvascular endothelial cell proliferation. Plays a role in blood glucose homeostasis contributing to the insulin secretion response by pancreatic beta cells. Triggers mitochondrial apoptosis during pachytene spermatocyte differentiation. Stimulates uterine epithelial cell proliferation. Enhances uterine contractility in response to oxytocin. Contributes to thymic atrophy by inducing apoptosis. Attenuates TNF-mediated endothelial expression of leukocyte adhesion molecules. Promotes neuritogenesis in developing hippocampal neurons. Plays a role in acute neuroprotection against NMDA-induced excitotoxic neuronal death. Increases firing activity and intracellular calcium oscillations in luteinizing hormone-releasing hormone (LHRH) neurons. Inhibits early osteoblast proliferation at growth plate during skeletal development. Inhibits mature adipocyte differentiation and lipid accumulation. Involved in the recruitment of beta-arrestin 2 ARRB2 at the plasma membrane in epithelial cells. Also functions as a receptor for aldosterone mediating rapid regulation of vascular contractibility through the PI3K/ERK signaling pathway. Involved in cancer progression regulation. Stimulates cancer-associated fibroblast (CAF) proliferation by a rapid genomic response through the EGFR/ERK transduction pathway. Associated with EGFR, may act as a transcription factor activating growth regulatory genes (c-fos, cyclin D1). Promotes integrin alpha-5/beta-1 and fibronectin (FN) matrix assembly in breast cancer cells. The chain is G-protein coupled estrogen receptor 1 (Gper1) from Mus musculus (Mouse).